Consider the following 132-residue polypeptide: MAELKKMRHNHYDVPVMDEPVIASQIKKTNQKKESFQLPQKKLNKISVFEKILCILLLCSIVGIVVITIQIRTTISETMNNITEAQVKNERKKEEMLKLEQEKSELSKADRIKSIGKKQGLSEIDGNLRKVK.

At 1 to 50 (MAELKKMRHNHYDVPVMDEPVIASQIKKTNQKKESFQLPQKKLNKISVFE) the chain is on the cytoplasmic side. Residues 51–71 (KILCILLLCSIVGIVVITIQI) traverse the membrane as a helical segment. The Extracellular segment spans residues 72–132 (RTTISETMNN…EIDGNLRKVK (61 aa)).

It belongs to the FtsL family.

The protein resides in the cell membrane. Its function is as follows. Essential cell division protein. The protein is Cell division protein FtsL of Melissococcus plutonius (strain ATCC 35311 / DSM 29964 / CIP 104052 / LMG 20360 / NCIMB 702443).